The chain runs to 1943 residues: MFLQFAVWKCLPHGILIASLLVVSWGQYDDDWQYEDCKLARGGPPATIVAIDEESRNGTILVDNMLIKGTAGGPDPTIELSLKDNVDYWVLLDPVKQMLFLNSTGRVLDRDPPMNIHSIVVQVQCVNKKVGTVIYHEVRIVVRDRNDNSPTFKHESYYATVNELTPVGTTIFTGFSGDNGATDIDDGPNGQIEYVIQYNPEDPTSNDTFEIPLMLTGNVVLRKRLNYEDKTRYYVIIQANDRAQNLNERRTTTTTLTVDVLDGDDLGPMFLPCVLVPNTRDCRPLTYQAAIPELRTPEELNPILVTPPIQAIDQDRNIQPPSDRPGILYSILVGTPEDYPRFFHMHPRTAELTLLEPVNRDFHQKFDLVIKAEQDNGHPLPAFASLHIEILDENNQSPYFTMPSYQGYILESAPVGATISESLNLTTPLRIVALDKDIEDTKDPELHLFLNDYTSVFTVTPTGITRYLTLLQPVDREEQQTYTFLITAFDGVQESEPVVVNIRVMDANDNTPTFPEISYDVYVYTDMSPGDSVIQLTAVDADEGSNGEISYEILVGGKGDFVINKTTGLVSIAPGVELIVGQTYALTVQASDNAPPAERRHSICTVYIEVLPPNNQSPPRFPQLMYSLEVSEAMRIGAILLNLQATDREGDPITYAIENGDPQRVFNLSETTGILSLGKALDRESTDRYILIVTASDGRPDGTSTATVNIVVTDVNDNAPVFDPYLPRNLSVVEEEANAFVGQVRATDPDAGINGQVHYSLGNFNNLFRITSNGSIYTAVKLNREARDHYELVVVATDGAVHPRHSTLTLYIKVLDIDDNSPVFTNSTYTVVVEENLPAGTSFLQIEAKDVDLGANVSYRIRSPEVKHLFALHPFTGELSLLRSLDYEAFPDQEASITFLVEAFDIYGTMPPGIATVTVIVKDMNDYPPVFSKRIYKGMVAPDAVKGTPITTVYAEDADPPGMPASRVRYRVDDVQFPYPASIFDVEEDSGRVVTRVNLNEEPTTIFKLVVVAFDDGEPVMSSSATVRILVLHPGEIPRFTQEEYRPPPVSELAARGTVVGVISAAAINQSIVYSIVAGNEEDKFGINNVTGVIYVNSPLDYETRTSYVLRVQADSLEVVLANLRVPSKSNTAKVYIEIQDENDHPPVFQKKFYIGGVSEDARMFASVLRVKATDRDTGNYSAMAYRLIIPPIKEGKEGFVVETYTGLIKTAMLFHNMRRSYFKFQVIATDDYGKGLSGKADVLVSVVNQLDMQVIVSNVPPTLVEKKIEDLTEILDRYVQEQIPGAKVVVESIGARRHGDAYSLEDYSKCDLTVYAIDPQTNRAIDRNELFKFLDGKLLDINKDFQPYYGEGGRILEIRTPEAVTSIKKRGESLGYTEGALLALAFIIILCCIPAILVVLVSYRQFKVRQAECTKTARIQSAMPAAKPAAPVPAAPAPPPPPPPPPPGAHLYEELGESAMHNLFLLYHFEQSRGNNSVPEDRSSHRDGMAFSSSTTESHEPAHVEGPLKESQPNPARTFSFVPDEDNLSTHNPLYMESIGQRSTNSDLQPRTDFEELLAPRTQVKSQSLRGPREKIQRVWNQSVSFPRRLMWKAPNRPETIDLVEWQITNQRAECESARCHPSQRGSSNVLLATEDAHESEKEGGHRDTLIVQQTEQLKSLSSGSSFSSSWSHFSFSTLPTISRAVELGSEPNVVTSPADCTLELSPPLRPRILNSLSSKRETPTCASDTEPKRNSFEIAPHPPSISAPLPHPPLPRPPIAFTTFPLPLSPPNPPPPQLVTFSLPISTPPTSSLPLPPPLSLPPPPRPPAPRLFPQPPSTSIPSTDSISAPAAKCTASATHARETTSTTQPPASNPQWGAEPHRHPKGILRHVKNLAELEKSVSNMYSHIEKNCPPADPSKLHTFCPAEKTGMKITHDQSQETLVRVVEGIDVQPHSQSTSL.

The signal sequence occupies residues 1-26 (MFLQFAVWKCLPHGILIASLLVVSWG). Residues 27–1381 (QYDDDWQYED…GESLGYTEGA (1355 aa)) are Extracellular-facing. An intrachain disulfide couples Cys37 to Cys125. Cadherin domains are found at residues 45–152 (PATI…SPTF), 153–270 (KHES…GPMF), 283–400 (RPLT…SPYF), 401–514 (TMPS…TPTF), 515–621 (PEIS…PPRF), 622–722 (PQLM…APVF), 724–824 (PYLP…SPVF), 825–931 (TNST…PPVF), 932–1040 (SKRI…IPRF), 1042–1149 (QEEY…PPVF), and 1150–1264 (QKKF…PPTL). Asn57, Asn102, and Asn206 each carry an N-linked (GlcNAc...) asparagine glycan. N-linked (GlcNAc...) asparagine glycosylation is found at Asn424, Asn564, Asn667, Asn729, Asn773, Asn826, and Asn856. Residues Asn1069, Asn1089, and Asn1180 are each glycosylated (N-linked (GlcNAc...) asparagine). Residues 1382 to 1402 (LLALAFIIILCCIPAILVVLV) form a helical membrane-spanning segment. At 1403–1943 (SYRQFKVRQA…VQPHSQSTSL (541 aa)) the chain is on the cytoplasmic side. Disordered stretches follow at residues 1425–1453 (PAAK…AHLY), 1475–1533 (GNNS…STHN), and 1714–1865 (ILNS…EPHR). Residues 1431-1449 (APVPAAPAPPPPPPPPPPG) are compositionally biased toward pro residues. Composition is skewed to basic and acidic residues over residues 1480–1489 (PEDRSSHRDG) and 1498–1509 (ESHEPAHVEGPL). Composition is skewed to pro residues over residues 1742-1760 (PHPP…PRPP) and 1769-1779 (PLSPPNPPPPQ). Low complexity predominate over residues 1784–1795 (SLPISTPPTSSL). A compositionally biased stretch (pro residues) spans 1796–1821 (PLPPPLSLPPPPRPPAPRLFPQPPST). A compositionally biased stretch (low complexity) spans 1822-1834 (SIPSTDSISAPAA). Positions 1846-1858 (TTSTTQPPASNPQ) are enriched in polar residues.

As to quaternary structure, antiparallel heterodimer with CDH23. Found in a complex with TMIE and LHFPL5. Interacts with LHFPL5/TMHS; this interaction is required for efficient localization to hair bundles. Interacts with MYO7A. Interacts with USH1G; this interaction may recruit USH1G to the plasma membrane. Interacts with TOMT. Isoforms CD1 and CD3 interact with TMC1 (via N-terminus) and TMC2 (via N-terminus). Interacts with PIEZO1. In terms of tissue distribution, expressed in brain and sensory epithelium of the developing inner ear. Expressed in the retina, in the photoreceptor inner segments, the outer plexiform layer, the inner nuclei layer and the ganglion cell layer and, more diffusely in the inner plexiform layer (at protein level). Not detected in the retinal pigment epithelium (at protein level). Expressed in the spleen, dorsal root ganglion, dorsal aspect of neural tube, floor plate and ependymal cells adjacent to the neural canal.

The protein resides in the cell membrane. The protein localises to the secreted. Calcium-dependent cell-adhesion protein. Required for inner ear neuroepithelial cell elaboration and cochlear function. Probably involved in the maintenance of normal retinal function. The protein is Protocadherin-15 (Pcdh15) of Mus musculus (Mouse).